The primary structure comprises 301 residues: Enolase-phosphatase E1 (301 aa).

Mg(2+) is bound by residues aspartate 22 and glutamate 24. Residues 163–164 and lysine 197 each bind substrate; that span reads SS. Aspartate 222 contributes to the Mg(2+) binding site. The interval 273–301 is disordered; it reads AQAGDTEAKRSASGDGALAAKKAPPTHDF.

This sequence belongs to the HAD-like hydrolase superfamily. MasA/MtnC family. As to quaternary structure, monomer. Mg(2+) serves as cofactor.

Its subcellular location is the cytoplasm. The protein resides in the nucleus. It carries out the reaction 5-methylsulfanyl-2,3-dioxopentyl phosphate + H2O = 1,2-dihydroxy-5-(methylsulfanyl)pent-1-en-3-one + phosphate. It participates in amino-acid biosynthesis; L-methionine biosynthesis via salvage pathway; L-methionine from S-methyl-5-thio-alpha-D-ribose 1-phosphate: step 3/6. Its pathway is amino-acid biosynthesis; L-methionine biosynthesis via salvage pathway; L-methionine from S-methyl-5-thio-alpha-D-ribose 1-phosphate: step 4/6. Bifunctional enzyme that catalyzes the enolization of 2,3-diketo-5-methylthiopentyl-1-phosphate (DK-MTP-1-P) into the intermediate 2-hydroxy-3-keto-5-methylthiopentenyl-1-phosphate (HK-MTPenyl-1-P), which is then dephosphorylated to form the acireductone 1,2-dihydroxy-3-keto-5-methylthiopentene (DHK-MTPene). In Monosiga brevicollis (Choanoflagellate), this protein is Enolase-phosphatase E1.